Consider the following 87-residue polypeptide: uncharacterized protein (87 aa).

The protein to A.fulgidus AF_0255 and AF_1348.

This is an uncharacterized protein from Archaeoglobus fulgidus (strain ATCC 49558 / DSM 4304 / JCM 9628 / NBRC 100126 / VC-16).